The primary structure comprises 227 residues: Urease accessory protein UreG (227 aa).

Over residues 1 to 10 (MHLDHAHTHD) the composition is skewed to basic and acidic residues. A disordered region spans residues 1-22 (MHLDHAHTHDGPSAVSADAHRP). 35-42 (GPVGSGKT) serves as a coordination point for GTP.

The protein belongs to the SIMIBI class G3E GTPase family. UreG subfamily. Homodimer. UreD, UreF and UreG form a complex that acts as a GTP-hydrolysis-dependent molecular chaperone, activating the urease apoprotein by helping to assemble the nickel containing metallocenter of UreC. The UreE protein probably delivers the nickel.

Its subcellular location is the cytoplasm. In terms of biological role, facilitates the functional incorporation of the urease nickel metallocenter. This process requires GTP hydrolysis, probably effectuated by UreG. The chain is Urease accessory protein UreG from Streptomyces avermitilis (strain ATCC 31267 / DSM 46492 / JCM 5070 / NBRC 14893 / NCIMB 12804 / NRRL 8165 / MA-4680).